Consider the following 280-residue polypeptide: MKKEKLRTENISFQYPGAATYALKDVSFSLYEGEWVSVIGQNGSGKSTLAKLLNGLFLPEAGTITVNDTMVLSEETVWDVRKQIGMVFQNPDNQFVGTTVQDDVVFGLENIGMPREQMVERLDQALRLVRMEDFLNDEPHSLSGGQKQRVAIAGVLALQPSILILDEATSMLDPQGRREVVETVRQLVNEKGITVLSITHDLEEAAQSDRVIILNKGEILEEGTPEQIFKSSHMLQEIGLDVPFSVKIAELLKRNEILLQNTHLTMESLVNELWRLHSKK.

One can recognise an ABC transporter domain in the interval 6 to 241 (LRTENISFQY…SHMLQEIGLD (236 aa)). 40–47 (GQNGSGKS) is an ATP binding site.

This sequence belongs to the ABC transporter superfamily. Energy-coupling factor EcfA family. In terms of assembly, forms a stable energy-coupling factor (ECF) transporter complex composed of 2 membrane-embedded substrate-binding proteins (S component), 2 ATP-binding proteins (A component) and 2 transmembrane proteins (T component).

The protein localises to the cell membrane. In terms of biological role, ATP-binding (A) component of a common energy-coupling factor (ECF) ABC-transporter complex. Unlike classic ABC transporters this ECF transporter provides the energy necessary to transport a number of different substrates. The sequence is that of Energy-coupling factor transporter ATP-binding protein EcfA1 from Bacillus cereus (strain ATCC 10987 / NRS 248).